Consider the following 329-residue polypeptide: Glycerol-3-phosphate dehydrogenase [NAD(P)+] (329 aa).

The NADPH site is built by Trp11 and Lys101. Sn-glycerol 3-phosphate contacts are provided by Lys101, Gly132, and Ser134. Ala136 contributes to the NADPH binding site. 5 residues coordinate sn-glycerol 3-phosphate: Lys188, Asp241, Ser251, Arg252, and Asn253. Residue Lys188 is the Proton acceptor of the active site. Arg252 provides a ligand contact to NADPH. Glu278 provides a ligand contact to NADPH.

The protein belongs to the NAD-dependent glycerol-3-phosphate dehydrogenase family.

The protein resides in the cytoplasm. It catalyses the reaction sn-glycerol 3-phosphate + NAD(+) = dihydroxyacetone phosphate + NADH + H(+). It carries out the reaction sn-glycerol 3-phosphate + NADP(+) = dihydroxyacetone phosphate + NADPH + H(+). It functions in the pathway membrane lipid metabolism; glycerophospholipid metabolism. Catalyzes the reduction of the glycolytic intermediate dihydroxyacetone phosphate (DHAP) to sn-glycerol 3-phosphate (G3P), the key precursor for phospholipid synthesis. The polypeptide is Glycerol-3-phosphate dehydrogenase [NAD(P)+] (Onion yellows phytoplasma (strain OY-M)).